The chain runs to 139 residues: 3-hydroxyacyl-[acyl-carrier-protein] dehydratase FabZ (139 aa).

The active site involves histidine 46.

The protein belongs to the thioester dehydratase family. FabZ subfamily.

It localises to the cytoplasm. It catalyses the reaction a (3R)-hydroxyacyl-[ACP] = a (2E)-enoyl-[ACP] + H2O. Its function is as follows. Involved in unsaturated fatty acids biosynthesis. Catalyzes the dehydration of short chain beta-hydroxyacyl-ACPs and long chain saturated and unsaturated beta-hydroxyacyl-ACPs. This is 3-hydroxyacyl-[acyl-carrier-protein] dehydratase FabZ from Streptococcus pyogenes serotype M3 (strain ATCC BAA-595 / MGAS315).